The following is a 488-amino-acid chain: UDP-N-acetylmuramoyl-L-alanyl-D-glutamate--2,6-diaminopimelate ligase (488 aa).

UDP-N-acetyl-alpha-D-muramoyl-L-alanyl-D-glutamate-binding positions include leucine 24, serine 26, and histidine 41 to valine 43. Glycine 113 to threonine 119 is an ATP binding site. Residues asparagine 154, threonine 155–threonine 156, serine 182, glutamine 188, and arginine 190 each bind UDP-N-acetyl-alpha-D-muramoyl-L-alanyl-D-glutamate. Residue lysine 222 is modified to N6-carboxylysine. Meso-2,6-diaminopimelate contacts are provided by residues arginine 386, aspartate 410 to arginine 413, glycine 461, and glutamate 465. The short motif at aspartate 410–arginine 413 is the Meso-diaminopimelate recognition motif element.

It belongs to the MurCDEF family. MurE subfamily. It depends on Mg(2+) as a cofactor. In terms of processing, carboxylation is probably crucial for Mg(2+) binding and, consequently, for the gamma-phosphate positioning of ATP.

It is found in the cytoplasm. The catalysed reaction is UDP-N-acetyl-alpha-D-muramoyl-L-alanyl-D-glutamate + meso-2,6-diaminopimelate + ATP = UDP-N-acetyl-alpha-D-muramoyl-L-alanyl-gamma-D-glutamyl-meso-2,6-diaminopimelate + ADP + phosphate + H(+). The protein operates within cell wall biogenesis; peptidoglycan biosynthesis. In terms of biological role, catalyzes the addition of meso-diaminopimelic acid to the nucleotide precursor UDP-N-acetylmuramoyl-L-alanyl-D-glutamate (UMAG) in the biosynthesis of bacterial cell-wall peptidoglycan. This chain is UDP-N-acetylmuramoyl-L-alanyl-D-glutamate--2,6-diaminopimelate ligase, found in Haemophilus influenzae (strain 86-028NP).